Here is a 429-residue protein sequence, read N- to C-terminus: 26S proteasome regulatory subunit RPN7 (429 aa).

Phosphoserine is present on residues Ser-8 and Ser-77. A TPR repeat occupies 131-164; the sequence is AQAWINLGEYYAQIGDKDNAEKTLGKSLSKAIST. The PCI domain occupies 223–395; the sequence is NFKEAAKLLV…GIVETNRPDN (173 aa).

The 26S proteasome is composed of a core protease, known as the 20S proteasome, capped at one or both ends by the 19S regulatory complex (RC). The RC is composed of at least 18 different subunits in two subcomplexes, the base and the lid, which form the portions proximal and distal to the 20S proteolytic core, respectively. Component of the lid subcomplex of the 19S RC.

It localises to the nucleus. Its function is as follows. Component of the 19S cap proteasome complex which acts as a regulatory subunit of the 26S proteasome, involved in the ATP-dependent degradation of ubiquitinated proteins. In Saccharomyces cerevisiae (strain ATCC 204508 / S288c) (Baker's yeast), this protein is 26S proteasome regulatory subunit RPN7.